The following is a 61-amino-acid chain: Large ribosomal subunit protein uL30 (61 aa).

A disordered region spans residues 1-20 (MSQKKVTVRQVGSPIGRKPE).

This sequence belongs to the universal ribosomal protein uL30 family. As to quaternary structure, part of the 50S ribosomal subunit.

This is Large ribosomal subunit protein uL30 from Hyphomonas neptunium (strain ATCC 15444).